The chain runs to 134 residues: Small ribosomal subunit protein uS8c (134 aa).

This sequence belongs to the universal ribosomal protein uS8 family. As to quaternary structure, part of the 30S ribosomal subunit.

It localises to the plastid. The protein localises to the chloroplast. Its function is as follows. One of the primary rRNA binding proteins, it binds directly to 16S rRNA central domain where it helps coordinate assembly of the platform of the 30S subunit. This is Small ribosomal subunit protein uS8c (rps8) from Pelargonium hortorum (Common geranium).